Reading from the N-terminus, the 442-residue chain is Proline--tRNA ligase (442 aa).

The protein belongs to the class-II aminoacyl-tRNA synthetase family. ProS type 2 subfamily. As to quaternary structure, homodimer.

It localises to the cytoplasm. It catalyses the reaction tRNA(Pro) + L-proline + ATP = L-prolyl-tRNA(Pro) + AMP + diphosphate. Catalyzes the attachment of proline to tRNA(Pro) in a two-step reaction: proline is first activated by ATP to form Pro-AMP and then transferred to the acceptor end of tRNA(Pro). The sequence is that of Proline--tRNA ligase from Brucella anthropi (strain ATCC 49188 / DSM 6882 / CCUG 24695 / JCM 21032 / LMG 3331 / NBRC 15819 / NCTC 12168 / Alc 37) (Ochrobactrum anthropi).